Here is a 188-residue protein sequence, read N- to C-terminus: V-type proton ATPase subunit E (188 aa).

The protein belongs to the V-ATPase E subunit family.

Functionally, produces ATP from ADP in the presence of a proton gradient across the membrane. In Dictyoglomus turgidum (strain DSM 6724 / Z-1310), this protein is V-type proton ATPase subunit E.